Here is a 353-residue protein sequence, read N- to C-terminus: Paraxanthine methyltransferase 2 (353 aa).

Tyr18 is an S-adenosyl-L-methionine binding site. Residues Tyr18 and 21–25 (QSSYQ) contribute to the substrate site. S-adenosyl-L-methionine contacts are provided by residues Gly59, 59-60 (GC), Asn65, 99-102 (FNDL), 128-130 (SFF), and 145-147 (SYA). 146–150 (YAFLF) is a binding site for substrate. Residues Asn167, Asp252, and Phe254 each coordinate Mg(2+). Residues Ser301 and Tyr306 each contribute to the substrate site.

This sequence belongs to the methyltransferase superfamily. SABATH family. Homodimer. It depends on Mg(2+) as a cofactor.

This chain is Paraxanthine methyltransferase 2, found in Arabidopsis thaliana (Mouse-ear cress).